The following is a 655-amino-acid chain: D-xylonate dehydratase YagF (655 aa).

The protein belongs to the IlvD/Edd family.

The catalysed reaction is D-xylonate = 2-dehydro-3-deoxy-D-arabinonate + H2O. In terms of biological role, catalyzes the dehydration of D-xylonic acid to form 2-dehydro-3-deoxy-D-pentonate. This chain is D-xylonate dehydratase YagF (yagF), found in Escherichia coli (strain K12).